We begin with the raw amino-acid sequence, 570 residues long: Protein FAM227A (570 aa).

Positions 87 to 99 are enriched in basic and acidic residues; sequence LREKTRSSPEDKV. 3 disordered regions span residues 87–112, 336–374, and 519–570; these read LREKTRSSPEDKVKRQRKSQYSCKGS, PAQSRKFYHPQSSSANSPSEKTSSAKQNSEKSLRMQNTA, and KAAD…TSKP. Y343 is modified (phosphotyrosine). Polar residues predominate over residues 345–362; it reads PQSSSANSPSEKTSSAKQ. S348 and S349 each carry phosphoserine. 2 stretches are compositionally biased toward basic and acidic residues: residues 363 to 374 and 540 to 562; these read NSEKSLRMQNTA and SPDKKTKEGKGGEGKRRETEVEH.

It belongs to the FAM227 family.

The chain is Protein FAM227A (FAM227A) from Homo sapiens (Human).